A 478-amino-acid chain; its full sequence is Ninja-family protein 7 (478 aa).

3 disordered regions span residues 1–247 (MDDD…LTPG), 336–374 (SFTAKDKADQTGTKQVDDGKKPREAGASSSAHAEDEKKA), and 454–478 (DAPAQDNSATLPAFPAGNQATSAEN). The segment covering 23–35 (KARDAPLEPKAEP) has biased composition (basic and acidic residues). Polar residues predominate over residues 169–179 (ISISTDDGSTG). The segment covering 180–189 (ENEDVAESEA) has biased composition (acidic residues). Positions 233–242 (SFSGSESSSG) are enriched in low complexity. Positions 339-359 (AKDKADQTGTKQVDDGKKPRE) are enriched in basic and acidic residues.

This sequence belongs to the Ninja family.

The protein localises to the nucleus. The chain is Ninja-family protein 7 from Zea mays (Maize).